A 774-amino-acid chain; its full sequence is Ion-translocating oxidoreductase complex subunit C (774 aa).

4Fe-4S ferredoxin-type domains lie at 359 to 389 (ELPEPVPAMPCIRCGDCAQVCPVSLLPQQLH) and 399 to 428 (QLLAHNLFDCIECGACAYVCPSSIPLVQYY). [4Fe-4S] cluster contacts are provided by Cys369, Cys372, Cys375, Cys379, Cys408, Cys411, Cys414, and Cys418. The span at 453–490 (EQRQARLRRDEERRAAERAQRAEKAALARAAQAEREEA) shows a compositional bias: basic and acidic residues. The interval 453–493 (EQRQARLRRDEERRAAERAQRAEKAALARAAQAEREEAAPA) is disordered.

The protein belongs to the 4Fe4S bacterial-type ferredoxin family. RnfC subfamily. The complex is composed of six subunits: RnfA, RnfB, RnfC, RnfD, RnfE and RnfG. [4Fe-4S] cluster serves as cofactor.

The protein localises to the cell inner membrane. Part of a membrane-bound complex that couples electron transfer with translocation of ions across the membrane. In Pseudomonas aeruginosa (strain ATCC 15692 / DSM 22644 / CIP 104116 / JCM 14847 / LMG 12228 / 1C / PRS 101 / PAO1), this protein is Ion-translocating oxidoreductase complex subunit C.